A 563-amino-acid chain; its full sequence is Adenine deaminase (563 aa).

The protein belongs to the metallo-dependent hydrolases superfamily. Adenine deaminase family. The cofactor is Mn(2+).

The catalysed reaction is adenine + H2O + H(+) = hypoxanthine + NH4(+). The chain is Adenine deaminase from Brucella anthropi (strain ATCC 49188 / DSM 6882 / CCUG 24695 / JCM 21032 / LMG 3331 / NBRC 15819 / NCTC 12168 / Alc 37) (Ochrobactrum anthropi).